Here is a 527-residue protein sequence, read N- to C-terminus: Putative BTB/POZ domain and WD-repeat protein R783 (527 aa).

A BTB domain is found at 45–115 (TDVTIVLDDG…FYSQNTDTRN (71 aa)). WD repeat units follow at residues 215–266 (IHGD…VEAS), 272–310 (NVKTRFEHFCYLPSNNHLISTSSYNIYVWDLSTNKLIKT), 313–353 (KHKN…IVRC), 355–391 (ISPVDCICYSSSGRELVIVNKHYIKVFNVSDGTFLFK), and 436–476 (YCPS…DNKY).

It belongs to the mimivirus BTB/WD family.

The polypeptide is Putative BTB/POZ domain and WD-repeat protein R783 (Acanthamoeba polyphaga (Amoeba)).